The chain runs to 354 residues: Maleylacetate reductase 1 (354 aa).

It belongs to the iron-containing alcohol dehydrogenase family. As to quaternary structure, homodimer.

The catalysed reaction is 3-oxoadipate + NAD(+) = maleylacetate + NADH + H(+). It carries out the reaction 3-oxoadipate + NADP(+) = maleylacetate + NADPH + H(+). It participates in aromatic compound metabolism; 3-chlorocatechol degradation. The sequence is that of Maleylacetate reductase 1 (tfdFI) from Cupriavidus pinatubonensis (strain JMP 134 / LMG 1197) (Cupriavidus necator (strain JMP 134)).